The primary structure comprises 270 residues: Phosphatidylglycerol--prolipoprotein diacylglyceryl transferase (270 aa).

7 helical membrane passes run 10-30, 56-76, 92-112, 120-140, 175-195, 202-222, and 237-257; these read VAVA…LVGI, LIFW…VLFY, WKGG…AWWF, FFQL…AGRI, SQLY…NLYA, MAVS…VEFV, and VTMG…LIWL. Arginine 139 is an a 1,2-diacyl-sn-glycero-3-phospho-(1'-sn-glycerol) binding site.

It belongs to the Lgt family.

The protein localises to the cell inner membrane. The catalysed reaction is L-cysteinyl-[prolipoprotein] + a 1,2-diacyl-sn-glycero-3-phospho-(1'-sn-glycerol) = an S-1,2-diacyl-sn-glyceryl-L-cysteinyl-[prolipoprotein] + sn-glycerol 1-phosphate + H(+). The protein operates within protein modification; lipoprotein biosynthesis (diacylglyceryl transfer). Catalyzes the transfer of the diacylglyceryl group from phosphatidylglycerol to the sulfhydryl group of the N-terminal cysteine of a prolipoprotein, the first step in the formation of mature lipoproteins. In Pseudomonas syringae pv. tomato (strain ATCC BAA-871 / DC3000), this protein is Phosphatidylglycerol--prolipoprotein diacylglyceryl transferase.